A 206-amino-acid polypeptide reads, in one-letter code: Outer-membrane lipoprotein carrier protein (206 aa).

The first 21 residues, 1-21, serve as a signal peptide directing secretion; the sequence is MKKLLCAVLLSPLLYSNAVLA.

The protein belongs to the LolA family. Monomer.

Its subcellular location is the periplasm. Functionally, participates in the translocation of lipoproteins from the inner membrane to the outer membrane. Only forms a complex with a lipoprotein if the residue after the N-terminal Cys is not an aspartate (The Asp acts as a targeting signal to indicate that the lipoprotein should stay in the inner membrane). The sequence is that of Outer-membrane lipoprotein carrier protein from Shewanella sp. (strain ANA-3).